Here is a 1146-residue protein sequence, read N- to C-terminus: TAWTFLKAMQKCSKKREARGSREAPETNFPDTTEESAQQICCTRDSSDSKSVPRSERNKKGIQCQGEGSSRGSQPGQFVGVTYNLEKRPTTIVLINDTPLNVLLDTGADTSVLTTAHYNRLKYRGRKYQGTGIIGVGGNVETFSTPVTIKKKGRHIKTRMLVADIPVTILGRDILQDLGAKLVLAQLSKEIKFRKIELKEGTMGPKIPQWPLTKEKLEGAKEIVQRLLSEGKISEASDNNPYNSPIFVIKKRSGKWRLLQDLRELNKTVQVGTEISRGLPHPGGLIKCKHMTVLDIGDAYFTIPLDPEFRPYTAFTIPSINHQEPDKRYVWNCLPQGFVLSPYIYQKTLQEILQPFRERYPEVQLYQYMDDLFVGSNGSKKQHKELIIELRAILLEKGFETPDDKLQEVPPYSWLGYQLCPENWKVQKMQLDMVKNPTLNDVQKLMGNITWMSSGVPGLTVKHIAATTKGCLELNQKVIWTEEAQKELEENNEKIKNAQGLQYYNPEEEMLCEVEITKNYEATYVIKQSQGILWAGKKIMKANKGWSTVKNLMLLLQHVATESITRVGKCPTFKVPFTKEQVMWEMQKGWYYSWLPEIVYTHQVVHDDWRMKLVEEPTSGITIYTDGGKQNGEGIAAYVTSNGRTKQKRLGPVTHQVAERMAIQMALEDTRDKQVNIVTDSYYCWKNITEGLGLEGPQSPWWPIIQNIREKEIVYFAWVPGHKGICGNQLADEAAKIKEEIMLAYQGTQIKEKRDEDAGFDLCVPYDIMIPVSDTKIIPTDVKIQVPPNSFGWVTGKSSMAKQGLLINGGIIDEGYTGEIQVICTNIGKSNIKLIEGQKFAQLIILQHHSNSRQPWDENKISQRGDKGFGSTGVFWVENIQEAQDEHENWHTSPKILARNYKIPLTVAKQITQECPHCTKQGSGPAGCVMRSPNHWQADCTHLDNKIILTFVESNSGYIHATLLSKENALCTSLAILEWARLFSPKSLHTDNGTNFVAEPVVNLLKFLKIAHTTGIPYHPESQGIVERANRTLKEKIQSHRDNTQTLEAALQLALITCNKGRESMGGQTPWEVFITNQAQVIHEKLLLQQAQSSKKFCFYKIPGEHDWKGPTRVLWKGDGAVVVNDEGKGIIAVPLTRTKLLIKPN.

Residues 13–77 (SKKREARGSR…GSSRGSQPGQ (65 aa)) form a disordered region. A compositionally biased stretch (polar residues) spans 29-41 (FPDTTEESAQQIC). Residues 45–59 (DSSDSKSVPRSERNK) show a composition bias toward basic and acidic residues. The segment covering 66 to 76 (GEGSSRGSQPG) has biased composition (polar residues). Positions 100-174 (LNVLLDTGAD…IPVTILGRDI (75 aa)) constitute a Peptidase A2 domain. Asp-105 is an active-site residue. The region spanning 230 to 419 (EGKISEASDN…PPYSWLGYQL (190 aa)) is the Reverse transcriptase domain. The RNase H type-1 domain maps to 617–740 (PTSGITIYTD…ADEAAKIKEE (124 aa)). The Integrase-type zinc finger occupies 878–919 (ENIQEAQDEHENWHTSPKILARNYKIPLTVAKQITQECPHCT). His-887, His-891, Cys-915, and Cys-918 together coordinate Zn(2+). The 158-residue stretch at 921–1078 (QGSGPAGCVM…TPWEVFITNQ (158 aa)) folds into the Integrase catalytic domain. Residues 1096–1144 (KFCFYKIPGEHDWKGPTRVLWKGDGAVVVNDEGKGIIAVPLTRTKLLIK) constitute a DNA-binding region (integrase-type).

This sequence belongs to the retroviral Pol polyprotein family. Post-translationally, specific enzymatic cleavages in vivo yield mature proteins.

The enzyme catalyses Endohydrolysis of RNA in RNA/DNA hybrids. Three different cleavage modes: 1. sequence-specific internal cleavage of RNA. Human immunodeficiency virus type 1 and Moloney murine leukemia virus enzymes prefer to cleave the RNA strand one nucleotide away from the RNA-DNA junction. 2. RNA 5'-end directed cleavage 13-19 nucleotides from the RNA end. 3. DNA 3'-end directed cleavage 15-20 nucleotides away from the primer terminus.. It catalyses the reaction 3'-end directed exonucleolytic cleavage of viral RNA-DNA hybrid.. It carries out the reaction DNA(n) + a 2'-deoxyribonucleoside 5'-triphosphate = DNA(n+1) + diphosphate. Its function is as follows. During replicative cycle of retroviruses, the reverse-transcribed viral DNA is integrated into the host chromosome by the viral integrase enzyme. RNase H activity is associated with the reverse transcriptase. The chain is Pol polyprotein (pol) from Equus asinus (Donkey).